The primary structure comprises 451 residues: mRNA cleavage and polyadenylation factor CLP1 (451 aa).

Residues Glu33, Lys72, and 133–138 (NTGKTA) each bind ATP.

It belongs to the Clp1 family. Clp1 subfamily. In terms of assembly, component of a pre-mRNA cleavage factor complex. Interacts directly with PCF11.

It is found in the nucleus. Functionally, required for endonucleolytic cleavage during polyadenylation-dependent pre-mRNA 3'-end formation. The chain is mRNA cleavage and polyadenylation factor CLP1 from Vanderwaltozyma polyspora (strain ATCC 22028 / DSM 70294 / BCRC 21397 / CBS 2163 / NBRC 10782 / NRRL Y-8283 / UCD 57-17) (Kluyveromyces polysporus).